The primary structure comprises 299 residues: HTH-type transcriptional regulator ArgP (299 aa).

The 57-residue stretch at 4–60 folds into the HTH lysR-type domain; that stretch reads PDYRALQALDAVIRERGFERAAQKLCITQSAVSQRIKQLENLFGQPLLVRTVPPQPT. Positions 21-40 form a DNA-binding region, H-T-H motif; sequence FERAAQKLCITQSAVSQRIK.

The protein belongs to the LysR transcriptional regulatory family. As to quaternary structure, homodimer.

Its function is as follows. Controls the transcription of genes involved in arginine and lysine metabolism. The polypeptide is HTH-type transcriptional regulator ArgP (Proteus mirabilis (strain HI4320)).